An 887-amino-acid polypeptide reads, in one-letter code: Multiple RNA-binding domain-containing protein 1 (887 aa).

One can recognise an RRM 1 domain in the interval 2 to 94; that stretch reads SRIIVKGLPV…SKIEVSMAKS (93 aa). Disordered regions lie at residues 121–143, 203–276, and 297–336; these read KLLQEENRKKKKVDENKHSNIDD, KEEN…RNLA, and SEAETREKSSSYATEQNESLDTKKEEQPERAVPQKTDEEL. 2 positions are modified to phosphoserine: Ser220 and Ser264. Positions 264 to 276 are enriched in basic and acidic residues; sequence SDEKENEKRRNLA. Positions 306–315 are enriched in polar residues; the sequence is SSYATEQNES. The span at 316-325 shows a compositional bias: basic and acidic residues; the sequence is LDTKKEEQPE. RRM domains follow at residues 345-423, 532-604, 663-746, and 763-840; these read GRLF…PGEE, KVIL…RGPK, VSIF…LSHR, and GKII…YAEE. The disordered stretch occupies residues 864–887; the sequence is EMAALRNGGGRKKLDVDDEENEGF.

This sequence belongs to the RRM MRD1 family. Interacts with NOP1. Binds to the 35S pre-rRNA and the U3 snoRNA.

The protein resides in the nucleus. Involved in pre-rRNA processing. Required for maintaining steady-state levels of 40S ribosomal subunit. Required for the initial processing of pre-rRNA at the A0 to A2 sites, leading to the processing of the 23S pre-rRNA intermediate to the 18S rRNA. This is Multiple RNA-binding domain-containing protein 1 (MRD1) from Saccharomyces cerevisiae (strain ATCC 204508 / S288c) (Baker's yeast).